The following is a 184-amino-acid chain: Sec-independent protein translocase protein TatB (184 aa).

Residues 1–21 traverse the membrane as a helical segment; it reads MFDIGFSELVLLFVVGLIVLG. The segment covering 149–168 has biased composition (acidic residues); that stretch reads AEEGEPMLEMGESDFSEDEQ. The disordered stretch occupies residues 149–184; that stretch reads AEEGEPMLEMGESDFSEDEQATASSNETIENIKEKV.

This sequence belongs to the TatB family. The Tat system comprises two distinct complexes: a TatABC complex, containing multiple copies of TatA, TatB and TatC subunits, and a separate TatA complex, containing only TatA subunits. Substrates initially bind to the TatABC complex, which probably triggers association of the separate TatA complex to form the active translocon.

The protein resides in the cell inner membrane. Functionally, part of the twin-arginine translocation (Tat) system that transports large folded proteins containing a characteristic twin-arginine motif in their signal peptide across membranes. Together with TatC, TatB is part of a receptor directly interacting with Tat signal peptides. TatB may form an oligomeric binding site that transiently accommodates folded Tat precursor proteins before their translocation. The protein is Sec-independent protein translocase protein TatB of Histophilus somni (strain 129Pt) (Haemophilus somnus).